The primary structure comprises 629 residues: MVALSTLSGLSALPFLFSLVQNVYGVSLEVSTEKGNSSSPILYGFMFEDINHSGDGGIYGQLLRNNGLQGSKPGLTAWAAVGDATIAVDAQNPLTEAIPHSLKLDVKQGASGAVGFTNEGYWGVPVDGSEFLNTFWIKGNFSGDITVRLVGNNTGTEYGSTKISQSSNSSNFTKVLAKIPTKKAPDGAVLYELTVDGASVGGSSLNFGLFELFPQTYKSRSNGLKPQVAQPLADMKGSFLRFPGGNNLEGASEARRWKWNETIGPVENRPGRQGDWSYYNTDGLGLDEYFYWCEDMGLTPVLGVWAGFALESGGNTPITGDALKPYIDDVLNELEYVLGDASTKYGSLRASYGRKEPWKLTMVEIGNEDMLGGGCESYVERFTAFSDAIHAAYPDLTIIASTDQSSCLPSKLPEGAWVDYHNYNTADNLVKQFSQFDNKDRSVPYFIGEYSCQQDNAWPFMQGSVAEAVYMIGIERNSDVVKMAAYAPLLQLVNSTQWTPNLIAFTQNPSTVIETTSYYVQQMFSVNRGDTIHNVTSDSAFGPVYWVASSADDKYYVKLANYGADTQEITVTISGKTGGKLTVLADSDPKAFNSDTQTLVTPSESDMKATNGKFTFTLPAWSVGVLAAH.

Positions 1–25 (MVALSTLSGLSALPFLFSLVQNVYG) are cleaved as a signal peptide. N-linked (GlcNAc...) asparagine glycosylation is found at Asn36, Asn51, Asn140, Asn152, Asn168, Asn171, Asn260, Asn494, and Asn534.

Belongs to the glycosyl hydrolase 51 family.

The protein resides in the secreted. It carries out the reaction Hydrolysis of terminal non-reducing alpha-L-arabinofuranoside residues in alpha-L-arabinosides.. Its pathway is glycan metabolism; L-arabinan degradation. Functionally, alpha-L-arabinofuranosidase involved in the degradation of arabinoxylan, a major component of plant hemicellulose. Acts only on small linear 1,5-alpha-linked L-arabinofuranosyl oligosaccharides. In Aspergillus oryzae (strain ATCC 42149 / RIB 40) (Yellow koji mold), this protein is Probable alpha-L-arabinofuranosidase A (abfA).